Consider the following 156-residue polypeptide: Translation initiation factor IF-1, chloroplastic (156 aa).

The transit peptide at 1–81 directs the protein to the chloroplast; the sequence is MASLSWWNPA…RRTTSIQCLS (81 aa). The interval 51 to 79 is disordered; it reads KSLLVKTQQQSKKKKNNSTNSRRTTSIQC. Over residues 67-76 the composition is skewed to low complexity; sequence NSTNSRRTTS. Residues 82-151 form the S1-like domain; sequence QEQKWTHEGS…SKGRIIYRLR (70 aa).

It belongs to the IF-1 family. In terms of assembly, component of the 30S ribosomal translation pre-initiation complex which assembles on the 30S ribosome in the order IF-2 and IF-3, IF-1 and N-formylmethionyl-tRNA(fMet); mRNA recruitment can occur at any time during PIC assembly.

It is found in the plastid. It localises to the chloroplast. In terms of biological role, one of the essential components for the initiation of protein synthesis. Stabilizes the binding of IF-2 and IF-3 on the 30S subunit to which N-formylmethionyl-tRNA(fMet) subsequently binds. Helps modulate mRNA selection, yielding the 30S pre-initiation complex (PIC). Upon addition of the 50S ribosomal subunit IF-1, IF-2 and IF-3 are released leaving the mature 70S translation initiation complex. This Solanum lycopersicum (Tomato) protein is Translation initiation factor IF-1, chloroplastic (infA).